The sequence spans 187 residues: MNLKNHFLVAMPSMKDPFFQRSVIYICEHDSDGTMGLRINEPVQISLKGMLDQIELDNPSPIIFPQTLSQPVLNGGPVSDDRGFVLHSNKDNYLSSIQVTDELSVTTSKDILATLGTEYQPYKYLVALGYSGWEGGQLEKELSENTWLTLEADPSVIFDTPIPDRWRKALQLLGINPANLSSEIGHA.

Belongs to the UPF0301 (AlgH) family.

The polypeptide is UPF0301 protein VF_0434 (Aliivibrio fischeri (strain ATCC 700601 / ES114) (Vibrio fischeri)).